The sequence spans 134 residues: Small ribosomal subunit protein uS9 (134 aa).

Positions 109–134 are disordered; that stretch reads DARRTEPHKPSKSSKGPRAKRQKSYR. A compositionally biased stretch (basic residues) spans 118–134; sequence PSKSSKGPRAKRQKSYR.

It belongs to the universal ribosomal protein uS9 family.

This Methanococcus maripaludis (strain C5 / ATCC BAA-1333) protein is Small ribosomal subunit protein uS9.